Here is a 258-residue protein sequence, read N- to C-terminus: Regulatory protein RecX (258 aa).

It belongs to the RecX family.

It is found in the cytoplasm. In terms of biological role, modulates RecA activity. The polypeptide is Regulatory protein RecX (Streptococcus mutans serotype c (strain ATCC 700610 / UA159)).